Consider the following 231-residue polypeptide: UPF0653 protein C607.02c (231 aa).

4 disordered regions span residues 1-33 (MPTKTKKRSVLEAERKKIGLDHAPKEDESVDDN), 47-68 (YHESKKKEIKKGNLKNKKKKDY), 93-132 (SFKSGPSKIDEFTDKKEKKKIAKRKEKRERDWNEIEENFE), and 147-178 (IESRKKRKNSPDPWANLQTKPSFGETVQAPPE). A compositionally biased stretch (basic and acidic residues) spans 9–27 (SVLEAERKKIGLDHAPKED). Composition is skewed to basic residues over residues 53 to 67 (KEIKKGNLKNKKKKD) and 109 to 119 (EKKKIAKRKEK).

It belongs to the UPF0653 family.

It localises to the nucleus. The protein localises to the nucleolus. The chain is UPF0653 protein C607.02c from Schizosaccharomyces pombe (strain 972 / ATCC 24843) (Fission yeast).